Consider the following 315-residue polypeptide: Tyrosine recombinase XerC (315 aa).

The Core-binding (CB) domain occupies 13–104 (ADLAAAREEW…GVRSLLRHLE (92 aa)). The Tyr recombinase domain maps to 125-309 (SLPKPLTADD…DTQRLLEVYD (185 aa)). Catalysis depends on residues R168, K193, H261, R264, and H287. Y296 functions as the O-(3'-phospho-DNA)-tyrosine intermediate in the catalytic mechanism.

Belongs to the 'phage' integrase family. XerC subfamily. As to quaternary structure, forms a cyclic heterotetrameric complex composed of two molecules of XerC and two molecules of XerD.

The protein resides in the cytoplasm. Functionally, site-specific tyrosine recombinase, which acts by catalyzing the cutting and rejoining of the recombining DNA molecules. The XerC-XerD complex is essential to convert dimers of the bacterial chromosome into monomers to permit their segregation at cell division. It also contributes to the segregational stability of plasmids. The polypeptide is Tyrosine recombinase XerC (Brucella suis biovar 1 (strain 1330)).